The chain runs to 347 residues: N-acetyl-gamma-glutamyl-phosphate reductase (347 aa).

Cysteine 152 is an active-site residue.

The protein belongs to the NAGSA dehydrogenase family. Type 1 subfamily.

The protein resides in the cytoplasm. It carries out the reaction N-acetyl-L-glutamate 5-semialdehyde + phosphate + NADP(+) = N-acetyl-L-glutamyl 5-phosphate + NADPH + H(+). The protein operates within amino-acid biosynthesis; L-arginine biosynthesis; N(2)-acetyl-L-ornithine from L-glutamate: step 3/4. Functionally, catalyzes the NADPH-dependent reduction of N-acetyl-5-glutamyl phosphate to yield N-acetyl-L-glutamate 5-semialdehyde. The protein is N-acetyl-gamma-glutamyl-phosphate reductase of Neisseria meningitidis serogroup C (strain 053442).